Reading from the N-terminus, the 1173-residue chain is MAVETLSPDWEFDRVDDGSQKIHAEVQLKNYGKFLEEYTSQLRRIEDALDDSIGDVWDFNLDPIALKLLPYEQSSLLELIKTENKVLNKVITVYAALCCEIKKLKYEAETKFYNGLLFYGEGATDASMVEGDCQIQMGRFISFLQELSCFVTRCYEVVMNVVHQLAALYISNKIAPKIIETTGVHFQTMYEHLGELLTVLLTLDEIIDNHITLKDHWTMYKRLLKSVHHNPSKFGIQEEKLKPFEKFLLKLEGQLLDGMIFQACIEQQFDSLNGGVSVSKNSTFAEEFAHSIRSIFANVEAKLGEPSEIDQRDKYVGICGLFVLHFQIFRTIDKKFYKSLLDICKKVPAITLTANIIWFPDNFLIQKIPAAAKLLDRKSLQAIKIHRDTFLQQKAQSLTKDVQSYYVFVSSWMMKMESILSKEQRMDKFAEDLTNRCNVFIQGFLYAYSISTIIKTTMNLYMSMQKPMTKTSVKALCRLVELLKAIEHMFYRRSMVVADSVSHITQHLQHQALHSISVAKKRVISDKKYSEQRLDVLSALVLAENTLNGPSTKQRRLIVSLALSVGTQMKTFKDEELFPLQVVMKKLDLISELRERVQTQCDCCFLYWHRAVFPIYLDDVYENAVDAARLHYMFSALRDCVPAMMHARHLESYEILLDCYDKEIMEILNEHLLDKLCKEIEKDLRLSVHTHLKLDDRNPFKVGMKDLALFFSLNPIRFFNRFIDIRAYVTHYLDKTFYNLTTVALHDWATYSEMRNLATQRYGLVMTEAHLPSQTLEQGLDVLEIMRNIHIFVSRYLYNLNNQIFIERTSNNKHLNTINIRHIANSIRTHGTGIMNTTVNFTYQFLKKKFYIFSQFMYDEHIKSRLIKDIRFFREIKDQNDHKYPFDRAEKFNRGIRKLGVTPEGQSYLDQFRQLISQIGNAMGYVRMIRSGGLHCSSNAIRFVPDLEDIVNFEELVKEEGLAEETLKAARHLDSVLSDHTRNSAEGTEYFKMLVDVFAPEFRRPKNIHLRNFYIIVPPLTLNFVEHSISCKEKLNKKNKIGAAFTDDGFAMGVAYILKLLDQYREFDSLHWFQSVREKYLKEIRAVAKQQNVQSASQDEKLLQTMNLTQKRLDVYLQEFELLYFSLSSARIFFRADKTAAEENQEKKEKEEETKTSNGDLSDSTVSADPVVK.

Ala-2 carries the post-translational modification N-acetylalanine. Ser-7 is subject to Phosphoserine. A sufficient for interaction with WASHC5 region spans residues Lys-705–Lys-1173. Residues Arg-1135–Leu-1161 adopt a coiled-coil conformation. Residues Glu-1142–Lys-1155 show a composition bias toward basic and acidic residues. The interval Glu-1142 to Lys-1173 is disordered. Thr-1154 bears the Phosphothreonine mark. Residues Ser-1157–Ser-1167 are compositionally biased toward polar residues.

Belongs to the SWIP family. Component of the WASH core complex also described as WASH regulatory complex (SHRC) composed of WASH (WASHC1, WASH2P or WASH3P), WASHC2 (WASHC2A or WASHC2C), WASHC3, WASHC4 and WASHC5. The WASH core complex associates via WASHC2 with the F-actin-capping protein dimer (formed by CAPZA1, CAPZA2 or CAPZA3 and CAPZB) in a transient or substoichiometric manner which was initially described as WASH complex.

It localises to the early endosome. Functionally, acts as a component of the WASH core complex that functions as a nucleation-promoting factor (NPF) at the surface of endosomes, where it recruits and activates the Arp2/3 complex to induce actin polymerization, playing a key role in the fission of tubules that serve as transport intermediates during endosome sorting. In Homo sapiens (Human), this protein is WASH complex subunit 4.